Consider the following 158-residue polypeptide: Endoribonuclease YbeY (158 aa).

Zn(2+) contacts are provided by His-118, His-122, and His-128.

It belongs to the endoribonuclease YbeY family. Zn(2+) serves as cofactor.

It localises to the cytoplasm. In terms of biological role, single strand-specific metallo-endoribonuclease involved in late-stage 70S ribosome quality control and in maturation of the 3' terminus of the 16S rRNA. The chain is Endoribonuclease YbeY from Bartonella quintana (strain Toulouse) (Rochalimaea quintana).